The following is a 387-amino-acid chain: Cobalt-precorrin-5B C(1)-methyltransferase (387 aa).

Belongs to the CbiD family.

It carries out the reaction Co-precorrin-5B + S-adenosyl-L-methionine = Co-precorrin-6A + S-adenosyl-L-homocysteine. The protein operates within cofactor biosynthesis; adenosylcobalamin biosynthesis; cob(II)yrinate a,c-diamide from sirohydrochlorin (anaerobic route): step 6/10. Functionally, catalyzes the methylation of C-1 in cobalt-precorrin-5B to form cobalt-precorrin-6A. The protein is Cobalt-precorrin-5B C(1)-methyltransferase of Desulfitobacterium hafniense (strain Y51).